A 318-amino-acid chain; its full sequence is Death effector domain-containing protein (318 aa).

The DED domain maps to 25–103 (SLHRMFDIVG…RHDLLPYVTL (79 aa)). 2 disordered regions span residues 128–147 (PRALSDPEPRPPQPSKTVPP) and 160–191 (QMCSKRPARGRATLGSQRKRRKSVTPDPKEKQ).

Interacts with CASP8, CASP10, KRT8, KRT18, CASP3 and FADD. Homodimerizes and heterodimerizes with DEDD2. Post-translationally, exists predominantly in a mono- or diubiquitinated form. Widely expressed with highest levels in testis.

It localises to the cytoplasm. Its subcellular location is the nucleus. The protein resides in the nucleolus. Its function is as follows. A scaffold protein that directs CASP3 to certain substrates and facilitates their ordered degradation during apoptosis. May also play a role in mediating CASP3 cleavage of KRT18. Regulates degradation of intermediate filaments during apoptosis. May play a role in the general transcription machinery in the nucleus and might be an important regulator of the activity of GTF3C3. Inhibits DNA transcription in vitro. This chain is Death effector domain-containing protein (DEDD), found in Homo sapiens (Human).